Here is a 221-residue protein sequence, read N- to C-terminus: PKHD-type hydroxylase PMT_0286 (221 aa).

The region spanning 80-174 (HIHGVMFSRS…RLVCVGWIQS (95 aa)) is the Fe2OG dioxygenase domain. Fe cation contacts are provided by H98, D100, and H155. R165 provides a ligand contact to 2-oxoglutarate.

The cofactor is Fe(2+). L-ascorbate serves as cofactor.

The protein is PKHD-type hydroxylase PMT_0286 of Prochlorococcus marinus (strain MIT 9313).